The following is a 61-amino-acid chain: Conotoxin 3 (61 aa).

Positions methionine 1–alanine 21 are cleaved as a signal peptide. Positions valine 22–asparagine 48 are excised as a propeptide. Residue tryptophan 58 is modified to 6'-bromotryptophan.

This sequence belongs to the conotoxin T superfamily. Contains 2 disulfide bonds that can be either 'C1-C3, C2-C4' or 'C1-C4, C2-C3', since these disulfide connectivities have been observed for conotoxins with cysteine framework V (for examples, see AC P0DQQ7 and AC P81755). In terms of processing, contains 2 disulfide bonds. In terms of tissue distribution, expressed by the venom duct.

It is found in the secreted. This is Conotoxin 3 from Conus textile (Cloth-of-gold cone).